Here is a 242-residue protein sequence, read N- to C-terminus: Ribosomal RNA small subunit methyltransferase G (242 aa).

S-adenosyl-L-methionine is bound by residues Gly82, Phe87, 133 to 134 (AE), and Arg152.

The protein belongs to the methyltransferase superfamily. RNA methyltransferase RsmG family.

The protein resides in the cytoplasm. In terms of biological role, specifically methylates the N7 position of a guanine in 16S rRNA. This is Ribosomal RNA small subunit methyltransferase G from Acetivibrio thermocellus (strain ATCC 27405 / DSM 1237 / JCM 9322 / NBRC 103400 / NCIMB 10682 / NRRL B-4536 / VPI 7372) (Clostridium thermocellum).